A 301-amino-acid polypeptide reads, in one-letter code: uncharacterized protein (301 aa).

The 58-residue stretch at 1 to 58 folds into the HTH lysR-type domain; sequence MDIRHLTYFLEVARLKSFTKASQSLYVSQPTISKMIKNLEEELGIELFYRNGRQVELT. Positions 18–37 form a DNA-binding region, H-T-H motif; it reads FTKASQSLYVSQPTISKMIK.

This sequence belongs to the LysR transcriptional regulatory family.

This is an uncharacterized protein from Bacillus subtilis (strain 168).